We begin with the raw amino-acid sequence, 213 residues long: Kynurenine formamidase (213 aa).

A substrate-binding site is contributed by Trp-18. Zn(2+)-binding residues include His-48, His-52, and Asp-54. The active-site Proton donor/acceptor is the His-58. Zn(2+) contacts are provided by His-160 and Glu-172.

This sequence belongs to the Cyclase 1 superfamily. KynB family. As to quaternary structure, homodimer. The cofactor is Zn(2+).

It catalyses the reaction N-formyl-L-kynurenine + H2O = L-kynurenine + formate + H(+). It functions in the pathway amino-acid degradation; L-tryptophan degradation via kynurenine pathway; L-kynurenine from L-tryptophan: step 2/2. Functionally, catalyzes the hydrolysis of N-formyl-L-kynurenine to L-kynurenine, the second step in the kynurenine pathway of tryptophan degradation. The chain is Kynurenine formamidase from Burkholderia orbicola (strain MC0-3).